We begin with the raw amino-acid sequence, 274 residues long: Putative phosphoenolpyruvate synthase regulatory protein (274 aa).

Glycine 155–threonine 162 is a binding site for ADP.

Belongs to the pyruvate, phosphate/water dikinase regulatory protein family. PSRP subfamily.

It catalyses the reaction [pyruvate, water dikinase] + ADP = [pyruvate, water dikinase]-phosphate + AMP + H(+). The enzyme catalyses [pyruvate, water dikinase]-phosphate + phosphate + H(+) = [pyruvate, water dikinase] + diphosphate. Bifunctional serine/threonine kinase and phosphorylase involved in the regulation of the phosphoenolpyruvate synthase (PEPS) by catalyzing its phosphorylation/dephosphorylation. This is Putative phosphoenolpyruvate synthase regulatory protein from Laribacter hongkongensis (strain HLHK9).